Reading from the N-terminus, the 932-residue chain is MLIFTIPQFFFAAWVMVVSLQMQGYISCIEKERKGLLELKAYVNKEYSYDWSNDTKSDCCRWERVECDRTSGRVIGLFLNQTFSDPILINLSLFHPFEELRTLNLYDFGCTGWFDDIHGYKSLGKLKKLEILDMGNNEVNNSVLPFLNAASSLRTLILHGNNMEGTFPMKELKDLSNLELLDLSGNLLNGPVPGLAVLHKLHALDLSDNTFSGSLGREGLCQLKNLQELDLSQNEFTGPFPQCFSSLTQLQVLDMSSNQFNGTLPSVISNLDSLEYLSLSDNKFEGFFSFDLIANLSKLKVFKLSSKSSLLHIESEISLQLKFRLSVIDLKYCNLEAVPSFLQQQKDLRLINLSNNKLTGISPSWFLENYPKLRVLLLWNNSFTIFHLPRLLVHSLHVLDLSVNKFDEWLPNNIGHVLPNISHLNLSNNGFQGNLPSSFSEMKKIFFLDLSHNNLSGSLPKKFCIGCSSLSILKLSYNRFSGKIFPQPMKLESLRVLIADNNQFTEITDVLIHSKGLVFLELSNNSLQGVIPSWFGGFYFLYLSVSDNLLNGTIPSTLFNVSFQLLDLSRNKFSGNLPSHFSFRHMGLLYLHDNEFSGPVPSTLLENVMLLDLRNNKLSGTIPRFVSNRYFLYLLLRGNALTGHIPTSLCELKSIRVLDLANNRLNGSIPPCLNNVSFGRSLDYEIDPDFGSSYGMVRADQELEESYSRSLVLPLEFELDYSGYLDFTVEFASKRRYDSYMGESFKFMFGLDFSSNELIGEIPRELGDFQRIRALNLSHNSLSGLVPESFSNLTDIESIDLSFNVLHGPIPHDLTKLDYIVVFNVSYNNLSGLIPSQGKFLSLDVTNYIGNPFLCGTTINKSCDDNTSGFKEIDSHSGDDETAIDMETFYWSLFATYGITWMAFIVFLCFDSPWRQAWFRLVNVFVSFLKCV.

The signal sequence occupies residues 1-28 (MLIFTIPQFFFAAWVMVVSLQMQGYISC). The Extracellular segment spans residues 29 to 888 (IEKERKGLLE…DDETAIDMET (860 aa)). N-linked (GlcNAc...) asparagine glycans are attached at residues Asn-53, Asn-80, and Asn-90. 28 LRR repeats span residues 97–122 (FEELRTLNLYDFGCTGWFDDIHGYKS), 126–152 (LKKLEILDMGNNEVNNSVLPFLNAASS), 154–174 (RTLILHGNNMEGTFPMKELKD), 175–200 (LSNLELLDLSGNLLNGPVPGLAVLHK), 202–222 (HALDLSDNTFSGSLGREGLCQ), 223–246 (LKNLQELDLSQNEFTGPFPQCFSS), 247–273 (LTQLQVLDMSSNQFNGTLPSVISNLDS), 275–295 (EYLSLSDNKFEGFFSFDLIAN), 296–320 (LSKLKVFKLSSKSSLLHIESEISLQ), 322–345 (KFRLSVIDLKYCNLEAVPSFLQQQ), 346–368 (KDLRLINLSNNKLTGISPSWFLE), 370–393 (YPKLRVLLLWNNSFTIFHLPRLLV), 394–417 (HSLHVLDLSVNKFDEWLPNNIGHV), 418–441 (LPNISHLNLSNNGFQGNLPSSFSE), 443–466 (KKIFFLDLSHNNLSGSLPKKFCIG), 468–491 (SSLSILKLSYNRFSGKIFPQPMKL), 492–514 (ESLRVLIADNNQFTEITDVLIHS), 516–535 (GLVFLELSNNSLQGVIPSWF), 536–560 (GGFYFLYLSVSDNLLNGTIPSTLFN), 561–583 (VSFQLLDLSRNKFSGNLPSHFSF), 585–605 (HMGLLYLHDNEFSGPVPSTLL), 606–629 (ENVMLLDLRNNKLSGTIPRFVSNR), 631–652 (FLYLLLRGNALTGHIPTSLCEL), 653–676 (KSIRVLDLANNRLNGSIPPCLNNV), 745–769 (FKFMFGLDFSSNELIGEIPRELGDF), 770–792 (QRIRALNLSHNSLSGLVPESFSN), 794–817 (TDIESIDLSFNVLHGPIPHDLTKL), and 819–842 (YIVVFNVSYNNLSGLIPSQGKFLS). Asn-140 carries N-linked (GlcNAc...) asparagine glycosylation. N-linked (GlcNAc...) asparagine glycosylation is found at Asn-261 and Asn-295. N-linked (GlcNAc...) asparagine glycosylation is found at Asn-352 and Asn-380. 3 N-linked (GlcNAc...) asparagine glycosylation sites follow: Asn-420, Asn-425, and Asn-454. Residues Asn-524, Asn-551, and Asn-560 are each glycosylated (N-linked (GlcNAc...) asparagine). N-linked (GlcNAc...) asparagine glycosylation is found at Asn-666 and Asn-675. Asn-776 and Asn-792 each carry an N-linked (GlcNAc...) asparagine glycan. N-linked (GlcNAc...) asparagine glycans are attached at residues Asn-824, Asn-829, Asn-860, and Asn-866. The chain crosses the membrane as a helical span at residues 889–909 (FYWSLFATYGITWMAFIVFLC). Topologically, residues 910–932 (FDSPWRQAWFRLVNVFVSFLKCV) are cytoplasmic.

This sequence belongs to the RLP family.

The protein localises to the cell membrane. The polypeptide is Receptor-like protein 9a (Arabidopsis thaliana (Mouse-ear cress)).